Consider the following 538-residue polypeptide: MEMELDDQGRMVVRPLLTDLYQATMGLGYWRAGRACEEAEFELFFRHCPFGGSFALTAGLQDCIRFLRAFRLRDADVQFLASVLPPDTDPAFFEHLRALDCSRVSVRALPEGSLAFPGVPLLQVSGPLLLVQLLETPLLCLVSYASLVATNAARLRLIAGPDKRLLEMGLRRAQGPDGGFTASIYSYLGGFDSSSNTLAGQLRGVPVAGTLAHSFITSFLGSEVPPDPMLAPASSEGPAVDLPASVNLWLKHVCIYLGLEEREPHLGERAAFVAYALAFPRAFQGLLDSYSVRRSGLPNFLAVALALGELGYRAVGVRLDSGDLLQQAKEIRGIFRTVGAEFQMPWLEFVPIAVSNNIDEKELARLAQKGSEVNVIGIGTNVVTCPKQPSMGCVYKLVSVGGQPRIKLTEESQKETLPGSKAAFRFLVSEGSLLLDLLQLAEEPPPKAGQELRVWLQGAQEPCTVKPAQVEPLLRLYLQQGQPYEPLPSLEESRAFAQQSLSRLRPAHKQLQNPAVYQVALSEKLRALVDSLSARGAL.

The nicotinate site is built by tyrosine 21 and threonine 210. Phosphohistidine is present on histidine 213. Residue arginine 318 participates in nicotinate binding. Threonine 380 contacts 5-phospho-alpha-D-ribose 1-diphosphate.

Belongs to the NAPRTase family. Homodimer. The cofactor is Mg(2+). Requires Mn(2+) as cofactor. In terms of processing, transiently phosphorylated on a His residue during the reaction cycle. Phosphorylation strongly increases the affinity for substrates and increases the rate of nicotinate D-ribonucleotide production. Dephosphorylation regenerates the low-affinity form of the enzyme, leading to product release.

It is found in the cytoplasm. It localises to the cytosol. It catalyses the reaction nicotinate + 5-phospho-alpha-D-ribose 1-diphosphate + ATP + H2O = nicotinate beta-D-ribonucleotide + ADP + phosphate + diphosphate. It functions in the pathway cofactor biosynthesis; NAD(+) biosynthesis; nicotinate D-ribonucleotide from nicotinate: step 1/1. In terms of biological role, catalyzes the first step in the biosynthesis of NAD from nicotinic acid, the ATP-dependent synthesis of beta-nicotinate D-ribonucleotide from nicotinate and 5-phospho-D-ribose 1-phosphate. Helps prevent cellular oxidative stress via its role in NAD biosynthesis. The polypeptide is Nicotinate phosphoribosyltransferase (Naprt) (Rattus norvegicus (Rat)).